Here is a 176-residue protein sequence, read N- to C-terminus: Sigma intracellular receptor 2 (176 aa).

Residues 1 to 9 lie on the Cytoplasmic side of the membrane; that stretch reads MGTLGARRG. Residues 10–30 form a helical membrane-spanning segment; the sequence is LEWFLGFYFLSHIPITLLMDL. The region spanning 10-158 is the EXPERA domain; the sequence is LEWFLGFYFL…PYFLIPLILL (149 aa). Residues 31–68 lie on the Lumenal side of the membrane; the sequence is QGVLPRDLYPVELRNLQQWYIEEFKDPLLQTPPAWFKS. Residues 69 to 89 form a helical membrane-spanning segment; that stretch reads FLFCELVFQLPFFPIAAYAFF. The cholesterol site is built by Val75 and Gln77. Over 90 to 99 the chain is Cytoplasmic; it reads KGGCKWIRTP. Residues 100 to 120 traverse the membrane as a helical segment; the sequence is AIIYSVHTMTTLIPILSTLLL. The Lumenal segment spans residues 121-141; sequence DDFSKASHFRGQGPKTFQERL. A helical membrane pass occupies residues 142-162; sequence FLISVYIPYFLIPLILLLFMV. Residues 163–176 are Cytoplasmic-facing; the sequence is RNPYYKSEEKRKKK. The ER retention motif signature appears at 172–176; sequence KRKKK.

This sequence belongs to the TMEM97/sigma-2 receptor family. In terms of assembly, homodimer. Interacts with NPC1; the interaction impairs NPC1-mediated cholesterol transport. Interacts with PGRMC1 and LDLR; the interaction increases LDL internalization. Interacts with histatin 1/HTN1; the interaction induces HTN1-stimulating wound healing. Interacts with TSPO.

It is found in the rough endoplasmic reticulum membrane. The protein localises to the nucleus membrane. Sigma-2 receptor which contributes to ameliorate dysfunctional cellular processes and slow degenerative progression by regulating cell functions including cholesterol biosynthesis/trafficking, membrane trafficking, autophagy, lipid membrane-bound protein trafficking, and receptor stabilization at the cell surface. Forms a ternary complex with PGRMC1 receptor and low density lipoprotein receptor/LDLR at the plasma membrane, which increases LDLR-mediated LDL cholesterol internalization. Decreases lysosomal sterol transporter NPC1 availability to the cell, probably through NPC1-binding, hence controlling lipid transport, including cholesterol and LBPA, outside of late endosome/lysosome. Binds regio- and stereoselective ligand 20(S)-hydroxycholesterol (20(S)-OHC) which enhances TMEM97-NPC1 interaction and decreases TMEM97-PGRMC1 and TMEM97-TSPO interactions, thereby linking OHC binding to cholesterol homeostasis. Also able to bind cholesterol. Binds histatin 1 (Hst 1)/HN1 salivary peptide at the ER membrane, which is critical for increasing mitochondria-ER contacts and stimulating Hst1 wound healing properties. May alter the activity of some cytochrome P450 proteins. Although shows homologies with sterol isomerases (EXPERA domain), not able to catalyze sterol isomerization. However, may act as sensors of these molecules. Acts as a quality control factor in the ER, promoting the proteolytic degradation of nonproductive and extramitochondrial precursor proteins in the ER membrane thus removing them from the ER surface. The chain is Sigma intracellular receptor 2 (TMEM97) from Bos taurus (Bovine).